The following is a 685-amino-acid chain: Polyphosphate kinase (685 aa).

Residue N45 coordinates ATP. Residues R375 and R405 each contribute to the Mg(2+) site. H435 serves as the catalytic Phosphohistidine intermediate. Positions 468, 564, and 592 each coordinate ATP.

Belongs to the polyphosphate kinase 1 (PPK1) family. The cofactor is Mg(2+). In terms of processing, an intermediate of this reaction is the autophosphorylated ppk in which a phosphate is covalently linked to a histidine residue through a N-P bond.

It carries out the reaction [phosphate](n) + ATP = [phosphate](n+1) + ADP. Functionally, catalyzes the reversible transfer of the terminal phosphate of ATP to form a long-chain polyphosphate (polyP). The protein is Polyphosphate kinase of Neisseria meningitidis serogroup C (strain 053442).